Consider the following 66-residue polypeptide: Large ribosomal subunit protein uL29 (66 aa).

The protein belongs to the universal ribosomal protein uL29 family.

This Helicobacter pylori (strain HPAG1) protein is Large ribosomal subunit protein uL29.